Here is a 570-residue protein sequence, read N- to C-terminus: Probable electron transfer flavoprotein-ubiquinone oxidoreductase (570 aa).

Valine 13–isoleucine 27 contacts FAD. The [4Fe-4S] cluster site is built by cysteine 515, cysteine 539, cysteine 542, and cysteine 545. In terms of domain architecture, 4Fe-4S ferredoxin-type spans lysine 530–proline 559.

It depends on [4Fe-4S] cluster as a cofactor. FAD is required as a cofactor.

The enzyme catalyses a ubiquinone + reduced [electron-transfer flavoprotein] = a ubiquinol + oxidized [electron-transfer flavoprotein] + H(+). Its function is as follows. Accepts electrons from ETF and reduces ubiquinone. The protein is Probable electron transfer flavoprotein-ubiquinone oxidoreductase (etfD) of Acinetobacter baylyi (strain ATCC 33305 / BD413 / ADP1).